The sequence spans 194 residues: Inosine triphosphate pyrophosphatase (194 aa).

Position 10-15 (10-15 (TSSKKK)) interacts with ITP. Glutamate 37 contributes to the Mg(2+) binding site. ITP contacts are provided by residues lysine 49, 65 to 66 (DV), lysine 82, 142 to 145 (FGWD), lysine 166, and 171 to 172 (HR).

This sequence belongs to the HAM1 NTPase family. Homodimer. Mg(2+) serves as cofactor. It depends on Mn(2+) as a cofactor.

It is found in the cytoplasm. The enzyme catalyses ITP + H2O = IMP + diphosphate + H(+). It catalyses the reaction dITP + H2O = dIMP + diphosphate + H(+). It carries out the reaction XTP + H2O = XMP + diphosphate + H(+). In terms of biological role, pyrophosphatase that hydrolyzes non-canonical purine nucleotides such as inosine triphosphate (ITP), deoxyinosine triphosphate (dITP) or xanthosine 5'-triphosphate (XTP) to their respective monophosphate derivatives. The enzyme does not distinguish between the deoxy- and ribose forms. Probably excludes non-canonical purines from RNA and DNA precursor pools, thus preventing their incorporation into RNA and DNA and avoiding chromosomal lesions. The protein is Inosine triphosphate pyrophosphatase of Giardia intestinalis (strain ATCC 50803 / WB clone C6) (Giardia lamblia).